The chain runs to 42 residues: Photosystem I reaction center subunit IX (42 aa).

Residues 7-27 (YLSTAPVLAAIWFAILAGLLI) form a helical membrane-spanning segment.

This sequence belongs to the PsaJ family.

It localises to the plastid. The protein localises to the chloroplast thylakoid membrane. In terms of biological role, may help in the organization of the PsaE and PsaF subunits. The chain is Photosystem I reaction center subunit IX from Zygnema circumcarinatum (Green alga).